The chain runs to 250 residues: Ribosomal RNA small subunit methyltransferase J (250 aa).

S-adenosyl-L-methionine-binding positions include 101 to 102 (RD), 117 to 118 (ER), 153 to 154 (SS), and D171.

Belongs to the methyltransferase superfamily. RsmJ family.

It is found in the cytoplasm. The enzyme catalyses guanosine(1516) in 16S rRNA + S-adenosyl-L-methionine = N(2)-methylguanosine(1516) in 16S rRNA + S-adenosyl-L-homocysteine + H(+). Functionally, specifically methylates the guanosine in position 1516 of 16S rRNA. In Shigella dysenteriae serotype 1 (strain Sd197), this protein is Ribosomal RNA small subunit methyltransferase J.